The primary structure comprises 236 residues: MAASSRSTRGRKQRGRSVEAKSRAIRANPPVPRPNPQRNRPPPAGTTCSMSEILLAVSATTADQILEIPVCAGIDFPAGTSPRYIGAAKWLAAQSQMWNTIVFNSVRITWETFTADTTSGYISMAFLSDYMLSIPTGVEDVARIVPSATIALKNRGPSIVMPQNRTVFRCIQAGQFAALGSAADKQMYSPGRFIVAIPKASATQAVGQIKISYSVSYRGAAILQPALVPGPGLANH.

The interval 1–46 (MAASSRSTRGRKQRGRSVEAKSRAIRANPPVPRPNPQRNRPPPAGT) is disordered. The interval 1–51 (MAASSRSTRGRKQRGRSVEAKSRAIRANPPVPRPNPQRNRPPPAGTTCSMS) is r domain, interaction with RNA. Residues 29–44 (PPVPRPNPQRNRPPPA) are compositionally biased toward pro residues. A s domain, virion shell region spans residues 52-217 (EILLAVSATT…QIKISYSVSY (166 aa)). The segment at 218 to 236 (RGAAILQPALVPGPGLANH) is p domain, projecting.

Belongs to the icosahedral plant coat protein family. As to quaternary structure, homomultimer.

The protein resides in the virion. Capsid protein self-assembles to form an icosahedral capsid with a T=3 symmetry, about 28-34 nm in diameter, and consisting of 180 capsid proteins. In Zea mays (Maize), this protein is Capsid protein.